The primary structure comprises 573 residues: Plasmepsin X (573 aa).

An N-terminal signal peptide occupies residues 1-26 (MKRISPLNTLFYLSLFFSYTFKGLKC). A propeptide spanning residues 27 to 221 (TRIYKIGTKA…SSIEKNFIAL (195 aa)) is cleaved from the precursor. Cystine bridges form between Cys39–Cys51 and Cys42–Cys48. A disordered region spans residues 167–211 (KGNKNFTNNENNSDNENNSDNENNSDNENNLDNENNLDNENNSDN). Acidic residues predominate over residues 183-203 (NNSDNENNSDNENNLDNENNL). The region spanning 248–567 (FVGELLVGTP…ESRPSMVGVA (320 aa)) is the Peptidase A1 domain. The active site involves Asp266. Residues Cys279 and Cys284 are joined by a disulfide bond. A glycan (N-linked (GlcNAc...) asparagine) is linked at Asn334. A disulfide bridge links Cys447 with Cys448. Asp457 is a catalytic residue. Residues Cys482 and Cys521 are joined by a disulfide bond.

The protein belongs to the peptidase A1 family. Post-translationally, autocleaved into a p16 prodomain form and two mature forms p44 and p51.

It localises to the cytoplasmic vesicle. The protein localises to the secretory vesicle. Inhibited by aminohydantoin compounds such as CWHM-117. Its function is as follows. During the asexual blood stage, processes key proteins essential for merozoite egress and invasion of host erythrocytes. Cleaves and activates proteases SUB1 and SUB2. May process members of the EBL and Rh protein families. Also cleaves apical membrane protein AMA1. During the mosquito vector stage and probably in ookinetes, cleaves CelTOS. The sequence is that of Plasmepsin X from Plasmodium falciparum (isolate NF54).